The chain runs to 380 residues: Succinyl-diaminopimelate desuccinylase (380 aa).

Position 66 (His-66) interacts with Zn(2+). Asp-68 is an active-site residue. Residue Asp-99 coordinates Zn(2+). The Proton acceptor role is filled by Glu-135. The Zn(2+) site is built by Glu-136, Glu-164, and His-350.

This sequence belongs to the peptidase M20A family. DapE subfamily. In terms of assembly, homodimer. Zn(2+) serves as cofactor. Requires Co(2+) as cofactor.

It catalyses the reaction N-succinyl-(2S,6S)-2,6-diaminopimelate + H2O = (2S,6S)-2,6-diaminopimelate + succinate. It participates in amino-acid biosynthesis; L-lysine biosynthesis via DAP pathway; LL-2,6-diaminopimelate from (S)-tetrahydrodipicolinate (succinylase route): step 3/3. In terms of biological role, catalyzes the hydrolysis of N-succinyl-L,L-diaminopimelic acid (SDAP), forming succinate and LL-2,6-diaminopimelate (DAP), an intermediate involved in the bacterial biosynthesis of lysine and meso-diaminopimelic acid, an essential component of bacterial cell walls. The polypeptide is Succinyl-diaminopimelate desuccinylase (Magnetococcus marinus (strain ATCC BAA-1437 / JCM 17883 / MC-1)).